The following is a 124-amino-acid chain: Small ribosomal subunit protein uS13 (124 aa).

The disordered stretch occupies residues 99-124 (RGQRTRTNARTRKGPRKTVGVMRKKS). Basic residues predominate over residues 101–124 (QRTRTNARTRKGPRKTVGVMRKKS).

It belongs to the universal ribosomal protein uS13 family. In terms of assembly, part of the 30S ribosomal subunit. Forms a loose heterodimer with protein S19. Forms two bridges to the 50S subunit in the 70S ribosome.

Its function is as follows. Located at the top of the head of the 30S subunit, it contacts several helices of the 16S rRNA. In the 70S ribosome it contacts the 23S rRNA (bridge B1a) and protein L5 of the 50S subunit (bridge B1b), connecting the 2 subunits; these bridges are implicated in subunit movement. Contacts the tRNAs in the A and P-sites. This is Small ribosomal subunit protein uS13 from Caldicellulosiruptor bescii (strain ATCC BAA-1888 / DSM 6725 / KCTC 15123 / Z-1320) (Anaerocellum thermophilum).